The following is a 325-amino-acid chain: Outer spore wall protein LDS1 (325 aa).

Residues 1–91 (MSFTGSLALA…NTNKSSYSTT (91 aa)) are Cytoplasmic-facing. The chain crosses the membrane as a helical span at residues 92–112 (MLGILSSYLIMFALVSFVYWA). Topologically, residues 113 to 118 (TITPMY) are extracellular. Residues 119-139 (TAFLIVLGPIGLFIAIFHSFL) form a helical membrane-spanning segment. The Cytoplasmic portion of the chain corresponds to 140-208 (QANVFTLLFM…VKYMLGLSVL (69 aa)). Residues 209–229 (FVLLVISFFPLIGPILFHILI) form a helical membrane-spanning segment. Residues 230 to 263 (SPFITQIYFTKVLRLQNFDNIQRRENIYLHAGQY) lie on the Extracellular side of the membrane. A helical transmembrane segment spans residues 264–284 (ASFGFLAGLIESVPILAGFAI). At 285–325 (STNTIGSVLFNLDHPMVPENLVETQAEIEAAPQDINQQPNQ) the chain is on the cytoplasmic side.

This sequence belongs to the LDS family.

The protein localises to the prospore membrane. It localises to the lipid droplet. The protein resides in the spore wall. Its function is as follows. Involved in spore wall assembly. The chain is Outer spore wall protein LDS1 from Saccharomyces cerevisiae (strain ATCC 204508 / S288c) (Baker's yeast).